The following is a 639-amino-acid chain: Chaperone protein DnaK (639 aa).

A Phosphothreonine; by autocatalysis modification is found at Thr196. Residues 592–639 (ASSLYQTPDAGAPGASGPSAGGEPETGKKGGDGEVQNAEYEVIDGNDK) are disordered. Over residues 601 to 613 (AGAPGASGPSAGG) the composition is skewed to low complexity.

Belongs to the heat shock protein 70 family.

Functionally, acts as a chaperone. This chain is Chaperone protein DnaK, found in Chlorobium limicola (strain DSM 245 / NBRC 103803 / 6330).